Here is a 309-residue protein sequence, read N- to C-terminus: Thioredoxin reductase (309 aa).

35–42 contacts FAD; the sequence is EKQFPGGK. A disulfide bond links cysteine 134 and cysteine 137. 277–286 is a binding site for FAD; that stretch reads DIVDKNVRQI.

The protein belongs to the class-II pyridine nucleotide-disulfide oxidoreductase family. As to quaternary structure, homodimer. The cofactor is FAD.

The protein resides in the cytoplasm. The enzyme catalyses [thioredoxin]-dithiol + NADP(+) = [thioredoxin]-disulfide + NADPH + H(+). This is Thioredoxin reductase (trxB) from Ureaplasma parvum serovar 3 (strain ATCC 700970).